The chain runs to 275 residues: MWRAGSMSAELGVGCALRAVNERVQQAVALRPRDLPAIQPRLVAVSKTKPADMVIEAYGHGQRTFGENYVQELLEKASNPKILSLGPEIKWHFIGHLQKQNVNKLMAVPNLFVLETVDSVKLAGKVNSSWQKKGSPERLKVMVQINTSGEESKHGLPPSETIAIVEHINAKCPNLEFVGLMTIGSFGHDLSQGPNPDFQLLLSLREELCKKLNIPADQVELSMGMSVDFQHAIEVGSTNVRIGSMIFGERDYSKKPAPDKCAADVKAPLEVAQEH.

The residue at position 6 (S6) is a Phosphoserine. K47 carries the N6-(pyridoxal phosphate)lysine modification. Y69 bears the Phosphotyrosine mark. Position 125 is an N6-succinyllysine (K125). S226 and S244 each carry phosphoserine.

This sequence belongs to the pyridoxal phosphate-binding protein YggS/PROSC family.

In terms of biological role, pyridoxal 5'-phosphate (PLP)-binding protein, which may be involved in intracellular homeostatic regulation of pyridoxal 5'-phosphate (PLP), the active form of vitamin B6. This is Pyridoxal phosphate homeostasis protein from Pongo abelii (Sumatran orangutan).